Consider the following 463-residue polypeptide: Asparagine--tRNA ligase (463 aa).

Belongs to the class-II aminoacyl-tRNA synthetase family. Homodimer.

It is found in the cytoplasm. It catalyses the reaction tRNA(Asn) + L-asparagine + ATP = L-asparaginyl-tRNA(Asn) + AMP + diphosphate + H(+). This is Asparagine--tRNA ligase from Bacillus cytotoxicus (strain DSM 22905 / CIP 110041 / 391-98 / NVH 391-98).